An 89-amino-acid polypeptide reads, in one-letter code: DNA-directed RNA polymerase subunit Rpo6 (89 aa).

The protein belongs to the archaeal Rpo6/eukaryotic RPB6 RNA polymerase subunit family. In terms of assembly, part of the 13-subunit RNA polymerase complex.

The protein localises to the cytoplasm. The enzyme catalyses RNA(n) + a ribonucleoside 5'-triphosphate = RNA(n+1) + diphosphate. Its function is as follows. DNA-dependent RNA polymerase (RNAP) catalyzes the transcription of DNA into RNA using the four ribonucleoside triphosphates as substrates. Reconstitution experiments show this subunit is required for basic activity. The protein is DNA-directed RNA polymerase subunit Rpo6 of Sulfolobus acidocaldarius (strain ATCC 33909 / DSM 639 / JCM 8929 / NBRC 15157 / NCIMB 11770).